Here is a 299-residue protein sequence, read N- to C-terminus: MAERDFIIVSGLSGSGKSTVLQALEDQGYYCVDNLPATLLVDFGAQLARRDASSMLAAVSIDVRNREFLAALPQALADLRQRYALCPRILFLEADEGTLLRRFSETRRRHPLTDDLAAALGESLLTVLRREREMVQPLADVADKRLDTSQINTHQLRLRVQAWSLASRHYSGLVLLLQSFAFKKGLPLDSDFVFDLRALPNPHYDPELRALTGRDAPVRDFLEKSPEVARSFVSLRTFLQTWLAPFAQEHRNYVTVSLGCTGGQHRSVYMVEALARLLAGEGQRVLIQHRELGITETLT.

11-18 (GLSGSGKS) provides a ligand contact to ATP. 62-65 (DVRN) contributes to the GTP binding site.

The protein belongs to the RapZ-like family.

In terms of biological role, displays ATPase and GTPase activities. The polypeptide is Nucleotide-binding protein AFE_3021 (Acidithiobacillus ferrooxidans (strain ATCC 23270 / DSM 14882 / CIP 104768 / NCIMB 8455) (Ferrobacillus ferrooxidans (strain ATCC 23270))).